The following is a 102-amino-acid chain: MIPGQYQIQPGDIELNDGRRTLSLAVANSGDRPIQVGSHFHFFETNDALTFDRAASRGMRLNIPAGTAVRFEPGQSREVELVDLAGLRKVYGFAGRVMGDLD.

The protein belongs to the urease beta subunit family. In terms of assembly, heterotrimer of UreA (gamma), UreB (beta) and UreC (alpha) subunits. Three heterotrimers associate to form the active enzyme.

The protein localises to the cytoplasm. It catalyses the reaction urea + 2 H2O + H(+) = hydrogencarbonate + 2 NH4(+). It functions in the pathway nitrogen metabolism; urea degradation; CO(2) and NH(3) from urea (urease route): step 1/1. This is Urease subunit beta from Pseudomonas savastanoi pv. phaseolicola (strain 1448A / Race 6) (Pseudomonas syringae pv. phaseolicola (strain 1448A / Race 6)).